Here is a 393-residue protein sequence, read N- to C-terminus: uncharacterized protein (393 aa).

The 140-residue stretch at 250 to 389 (AVIVYDTMYN…KCYEFGKRLA (140 aa)) folds into the Flavodoxin-like domain.

This is an uncharacterized protein from Methanocaldococcus jannaschii (strain ATCC 43067 / DSM 2661 / JAL-1 / JCM 10045 / NBRC 100440) (Methanococcus jannaschii).